Consider the following 147-residue polypeptide: Large ribosomal subunit protein uL15 (147 aa).

Residues 1–46 form a disordered region; that stretch reads MSIRLENLSYTPGARKEKHRKGRGHAAGKGKQAGRGQSGQKKRSTV. Residues 16-28 show a composition bias toward basic residues; it reads KEKHRKGRGHAAG.

Belongs to the universal ribosomal protein uL15 family. Part of the 50S ribosomal subunit.

Its function is as follows. Binds to the 23S rRNA. The sequence is that of Large ribosomal subunit protein uL15 from Mesomycoplasma hyopneumoniae (strain 7448) (Mycoplasma hyopneumoniae).